The sequence spans 364 residues: Polygalacturonase (364 aa).

An N-terminal signal peptide occupies residues 1–21 (MVAYALTSMLLSAGALVAAAP). The propeptide occupies 22 to 27 (SGLDAR). Cys30 and Cys45 are disulfide-bonded. PbH1 repeat units lie at residues 158–188 (VTGL…DIGS), 189–210 (SSGI…AINS), 211–231 (GSDI…SIGS), 240–261 (VKGV…RIKT), 269–291 (VSDI…VIEQ), and 303–348 (TTGV…SITG). Asp203 acts as the Proton donor in catalysis. A disulfide bond links Cys205 and Cys221. Residue His225 is part of the active site. Asn276 carries an N-linked (GlcNAc...) asparagine glycan. A disulfide bond links Cys331 and Cys336. Residue Asn340 is glycosylated (N-linked (GlcNAc...) asparagine). An intrachain disulfide couples Cys355 to Cys364.

It belongs to the glycosyl hydrolase 28 family.

The protein localises to the secreted. It carries out the reaction (1,4-alpha-D-galacturonosyl)n+m + H2O = (1,4-alpha-D-galacturonosyl)n + (1,4-alpha-D-galacturonosyl)m.. Functionally, involved in maceration and soft-rotting of plant tissue. Hydrolyzes the 1,4-alpha glycosidic bonds of de-esterified pectate in the smooth region of the plant cell wall. The polypeptide is Polygalacturonase (PGN1) (Cochliobolus carbonum (Maize leaf spot fungus)).